The chain runs to 142 residues: Hemoglobin subunit alpha-A (142 aa).

In terms of domain architecture, Globin spans V2–R142. H59 is an O2 binding site. H88 serves as a coordination point for heme b.

It belongs to the globin family. Heterotetramer of two alpha chains and two beta chains. Red blood cells.

Functionally, involved in oxygen transport from the lung to the various peripheral tissues. The chain is Hemoglobin subunit alpha-A (HBAA) from Apus apus (Common swift).